Reading from the N-terminus, the 610-residue chain is Methionine--tRNA ligase (610 aa).

The 'HIGH' region motif lies at 12 to 22; the sequence is PYANGPRHIGH. C144, C147, C157, and C160 together coordinate Zn(2+). Residues 348–352 carry the 'KMSKS' region motif; the sequence is KFSSS. S351 is a binding site for ATP.

Belongs to the class-I aminoacyl-tRNA synthetase family. MetG type 1 subfamily. Monomer. It depends on Zn(2+) as a cofactor.

Its subcellular location is the cytoplasm. The catalysed reaction is tRNA(Met) + L-methionine + ATP = L-methionyl-tRNA(Met) + AMP + diphosphate. Functionally, is required not only for elongation of protein synthesis but also for the initiation of all mRNA translation through initiator tRNA(fMet) aminoacylation. This Corynebacterium glutamicum (strain R) protein is Methionine--tRNA ligase.